The primary structure comprises 167 residues: 6,7-dimethyl-8-ribityllumazine synthase (167 aa).

5-amino-6-(D-ribitylamino)uracil-binding positions include Phe-24, 58 to 60 (ALE), and 82 to 84 (AVV). 87 to 88 (ET) serves as a coordination point for (2S)-2-hydroxy-3-oxobutyl phosphate. Residue His-90 is the Proton donor of the active site. Position 115 (Asn-115) interacts with 5-amino-6-(D-ribitylamino)uracil. Residue Arg-129 coordinates (2S)-2-hydroxy-3-oxobutyl phosphate.

Belongs to the DMRL synthase family.

The enzyme catalyses (2S)-2-hydroxy-3-oxobutyl phosphate + 5-amino-6-(D-ribitylamino)uracil = 6,7-dimethyl-8-(1-D-ribityl)lumazine + phosphate + 2 H2O + H(+). The protein operates within cofactor biosynthesis; riboflavin biosynthesis; riboflavin from 2-hydroxy-3-oxobutyl phosphate and 5-amino-6-(D-ribitylamino)uracil: step 1/2. Functionally, catalyzes the formation of 6,7-dimethyl-8-ribityllumazine by condensation of 5-amino-6-(D-ribitylamino)uracil with 3,4-dihydroxy-2-butanone 4-phosphate. This is the penultimate step in the biosynthesis of riboflavin. In Cupriavidus pinatubonensis (strain JMP 134 / LMG 1197) (Cupriavidus necator (strain JMP 134)), this protein is 6,7-dimethyl-8-ribityllumazine synthase.